A 399-amino-acid chain; its full sequence is Serine palmitoyltransferase (399 aa).

Pyridoxal 5'-phosphate contacts are provided by residues 113–114, H213, T241, and S243; that span reads GF. N6-(pyridoxal phosphate)lysine is present on K244.

Belongs to the class-II pyridoxal-phosphate-dependent aminotransferase family. Homodimer. The cofactor is pyridoxal 5'-phosphate.

It is found in the cytoplasm. Its subcellular location is the cell inner membrane. It carries out the reaction L-serine + hexadecanoyl-CoA + H(+) = 3-oxosphinganine + CO2 + CoA. Its pathway is lipid metabolism; sphingolipid metabolism. Its function is as follows. Catalyzes the condensation of L-serine with palmitoyl-CoA (hexadecanoyl-CoA) to produce 3-oxosphinganine. Exhibits a broad substrate specificity concerning the chain length and the degree of unsaturation of acyl-CoA. The protein is Serine palmitoyltransferase of Sphingobacterium multivorum.